Reading from the N-terminus, the 471-residue chain is Argininosuccinate lyase (471 aa).

This sequence belongs to the lyase 1 family. Argininosuccinate lyase subfamily.

The protein resides in the cytoplasm. The catalysed reaction is 2-(N(omega)-L-arginino)succinate = fumarate + L-arginine. It participates in amino-acid biosynthesis; L-arginine biosynthesis; L-arginine from L-ornithine and carbamoyl phosphate: step 3/3. The sequence is that of Argininosuccinate lyase from Ralstonia pickettii (strain 12J).